A 304-amino-acid chain; its full sequence is Oxygen-dependent coproporphyrinogen-III oxidase (304 aa).

Position 94 (Ser-94) interacts with substrate. Positions 98 and 108 each coordinate a divalent metal cation. Catalysis depends on His-108, which acts as the Proton donor. Residue 110 to 112 participates in substrate binding; it reads NVR. A divalent metal cation-binding residues include His-147 and His-177. Residues 242-277 are important for dimerization; the sequence is YVEFNLVYDRGTLFGLQTGGRTESILMSMPPLVRWQ. 260 to 262 provides a ligand contact to substrate; sequence GGR.

The protein belongs to the aerobic coproporphyrinogen-III oxidase family. As to quaternary structure, homodimer. It depends on a divalent metal cation as a cofactor.

It is found in the cytoplasm. The catalysed reaction is coproporphyrinogen III + O2 + 2 H(+) = protoporphyrinogen IX + 2 CO2 + 2 H2O. It participates in porphyrin-containing compound metabolism; protoporphyrin-IX biosynthesis; protoporphyrinogen-IX from coproporphyrinogen-III (O2 route): step 1/1. In terms of biological role, involved in the heme biosynthesis. Catalyzes the aerobic oxidative decarboxylation of propionate groups of rings A and B of coproporphyrinogen-III to yield the vinyl groups in protoporphyrinogen-IX. This Shewanella amazonensis (strain ATCC BAA-1098 / SB2B) protein is Oxygen-dependent coproporphyrinogen-III oxidase.